The sequence spans 318 residues: tRNA-modifying protein YgfZ (318 aa).

Positions 24 and 185 each coordinate folate.

The protein belongs to the tRNA-modifying YgfZ family.

It is found in the cytoplasm. In terms of biological role, folate-binding protein involved in regulating the level of ATP-DnaA and in the modification of some tRNAs. It is probably a key factor in regulatory networks that act via tRNA modification, such as initiation of chromosomal replication. The sequence is that of tRNA-modifying protein YgfZ from Buchnera aphidicola subsp. Baizongia pistaciae (strain Bp).